The primary structure comprises 78 residues: U-scoloptoxin(13)-Er1a (78 aa).

Positions 1-24 are cleaved as a signal peptide; that stretch reads MFPSWSTTFVLCMGLCSLMNGALA.

Belongs to the scoloptoxin-13 family. Contains 4 disulfide bonds. As to expression, expressed by the venom gland.

The protein resides in the secreted. The sequence is that of U-scoloptoxin(13)-Er1a from Ethmostigmus rubripes (Giant centipede).